We begin with the raw amino-acid sequence, 186 residues long: Cytochrome c oxidase subunit 4, mitochondrial (186 aa).

A mitochondrion-targeting transit peptide spans 1 to 31; sequence MLLSRTAVAVARRATAAPALRRSIATTVVRC. Residues Cys118, His126, Cys142, and Cys145 each coordinate Zn(2+).

This sequence belongs to the cytochrome c oxidase subunit 5B family. Component of the cytochrome c oxidase (complex IV, CIV), a multisubunit enzyme composed of 11 subunits. The complex is composed of a catalytic core of 3 subunits Cox1, Cox2 and Cox3, encoded in the mitochondrial DNA, and 8 supernumerary subunits Cox4, Cox5a/Cox5, Cox6, Cox7, Cox8, Cox7a/Cox9, Cox6b/Cox12 and Cox6a/Cox13, which are encoded in the nuclear genome. The complex exists as a monomer or a dimer and forms respiratory supercomplexes (SCs) in the inner mitochondrial membrane with NADH-ubiquinone oxidoreductase (complex I, CI) and ubiquinol-cytochrome c oxidoreductase (cytochrome b-c1 complex, complex III, CIII), resulting in various different assemblies (supercomplexes I(1)IV(1), I(1)III(3)IV(2), III(2)IV(1) and III(2)IV(2) as well as larger supercomplexes of compositions like I(1)III(2)IV(5-6)).

It is found in the mitochondrion inner membrane. It participates in energy metabolism; oxidative phosphorylation. Functionally, component of the cytochrome c oxidase, the last enzyme in the mitochondrial electron transport chain which drives oxidative phosphorylation. The respiratory chain contains 3 multisubunit complexes succinate dehydrogenase (complex II, CII), ubiquinol-cytochrome c oxidoreductase (cytochrome b-c1 complex, complex III, CIII) and cytochrome c oxidase (complex IV, CIV), that cooperate to transfer electrons derived from NADH and succinate to molecular oxygen, creating an electrochemical gradient over the inner membrane that drives transmembrane transport and the ATP synthase. Cytochrome c oxidase is the component of the respiratory chain that catalyzes the reduction of oxygen to water. Electrons originating from reduced cytochrome c in the intermembrane space (IMS) are transferred via the dinuclear copper A center (CU(A)) of Cox2 and heme A of Cox1 to the active site in Cox1, a binuclear center (BNC) formed by heme A3 and copper B (CU(B)). The BNC reduces molecular oxygen to 2 water molecules using 4 electrons from cytochrome c in the IMS and 4 protons from the mitochondrial matrix. This chain is Cytochrome c oxidase subunit 4, mitochondrial (cox-4), found in Neurospora crassa (strain ATCC 24698 / 74-OR23-1A / CBS 708.71 / DSM 1257 / FGSC 987).